The chain runs to 181 residues: Methanesulfonate monooxygenase hydroxylase subunit beta (181 aa).

Belongs to the bacterial ring-hydroxylating dioxygenase beta subunit family. The MSA monooxygenase system consists of 4 proteins: the 2 subunits of the hydroxylase component (MsmA and MsmB), a ferredoxin (MsmC) and a ferredoxin reductase (MsmD). The hydroxylase component consists of a 3 alpha (MsmA) and 3 beta (MsmB) subunits.

It localises to the cytoplasm. It carries out the reaction methanesulfonate + NADH + O2 = sulfite + formaldehyde + NAD(+) + H2O. Its activity is regulated as follows. MSAMO is inhibited by metal chelators (such as bathophenanthroline, bathocuprione, neocuprione, alpha-alpha-dipyridil and sodium EDTA) and by sodium azide, sodium arsenate and potassium cyanide. Methanesulfonate monooxygenase (MSAMO) mediates the primary degradation of methanesulfonic acid (MSA) to produce formaldehyd and inorganic sulfite by initial hydroxylation of the carbon atom prior to spontaneous cleavage of the unstable hydroxymethanesulfonic acid. MSAMO has a restricted substrate range that includes only the short-chain aliphatic sulfonates (methane- to butanesulfonate) and excludes all larger molecules, such as arylsulfonates and aromatic sulfonates. All MSAMO components are required for enzyme activity. The polypeptide is Methanesulfonate monooxygenase hydroxylase subunit beta (Methylosulfonomonas methylovora).